The chain runs to 736 residues: Exo-oligoalginate lyase (736 aa).

The N-terminal stretch at 1–23 (MLSVNTIKNTLLAAVLVSVPATA) is a signal peptide. Substrate is bound by residues lysine 136, 146-149 (QSLN), lysine 198, histidine 202, and 257-260 (YYQR). Tyrosine 258 (proton donor) is an active-site residue. Catalysis depends on histidine 413, which acts as the Proton acceptor. 2 residues coordinate Zn(2+): histidine 415 and aspartate 433. Arginine 438 lines the substrate pocket. Histidine 464 contributes to the Zn(2+) binding site. Glutamate 667 contacts substrate.

It belongs to the polysaccharide lyase 17 family. As to quaternary structure, homodimer. Requires Zn(2+) as cofactor.

It is found in the periplasm. It carries out the reaction Cleavage of 4-deoxy-alpha-L-erythro-hex-4-enopyranuronoside oligosaccharides into 4-deoxy-alpha-L-erythro-hex-4-enopyranuronate monosaccharides.. In terms of biological role, catalyzes the depolymerization of alginate through an exolytic mode of action, via a beta-elimination mechanism. Preferentially acts on oligoalginates with degrees of polymerization higher than 2 to produce the alginate monomer, 4-deoxy-L-erythro-5-hexoseulose uronic acid. The polypeptide is Exo-oligoalginate lyase (Saccharophagus degradans (strain 2-40 / ATCC 43961 / DSM 17024)).